Here is a 417-residue protein sequence, read N- to C-terminus: Delta-aminolevulinic acid dehydratase, chloroplastic (417 aa).

The transit peptide at M1–T40 directs the protein to the chloroplast. Residues V63 to L92 form a disordered region. The Schiff-base intermediate with substrate role is filled by K286. R296 and K308 together coordinate 5-aminolevulinate. E324 serves as a coordination point for Mg(2+). The active-site Schiff-base intermediate with substrate is the K339. 5-aminolevulinate is bound by residues S365 and Y404.

It belongs to the ALAD family. As to quaternary structure, homooctamer. Requires Mg(2+) as cofactor.

It localises to the plastid. The protein resides in the chloroplast. It carries out the reaction 2 5-aminolevulinate = porphobilinogen + 2 H2O + H(+). Its pathway is porphyrin-containing compound metabolism; protoporphyrin-IX biosynthesis; coproporphyrinogen-III from 5-aminolevulinate: step 1/4. Catalyzes an early step in the biosynthesis of tetrapyrroles. Binds two molecules of 5-aminolevulinate per subunit, each at a distinct site, and catalyzes their condensation to form porphobilinogen. In Selaginella martensii (Martens's spike moss), this protein is Delta-aminolevulinic acid dehydratase, chloroplastic (HEMB).